Consider the following 395-residue polypeptide: Methylmalonyl-CoA decarboxylase subunit beta (395 aa).

Helical transmembrane passes span 17–37 (LNMGSIIMMLVACVFLYLAIA), 43–63 (LLLVPISFGILLTNLPFAGMM), 103–123 (GIFPPLIFLGVGAMTDFGPLI), 128–148 (SLLLGAAAQFGIFVTFFGAIA), 180–200 (PHLMGPIAVAAYSYMALVPII), 230–250 (IIFPIVVTILVSLIVPPAATL), 278–298 (INIITIFLGVTVGATATAEAF), 304–324 (LAILGLGIVAFGIGTGSGVLL), and 374–394 (GPNVAGVIGSAVSAGVLLSLF).

The protein belongs to the GcdB/MmdB/OadB family. As to quaternary structure, the methylmalonyl-CoA decarboxylase is composed of four subunits: the carboxyltransferase alpha subunit (MmdA), the tunnel beta subunit (MmdB), the biotin-containing gamma subunit (MmdC) and the delta subunit (MmdD). Post-translationally, the N-terminus is blocked.

The protein localises to the cell membrane. The catalysed reaction is (S)-methylmalonyl-CoA + Na(+)(in) + H(+)(out) = propanoyl-CoA + Na(+)(out) + CO2. In terms of biological role, tunnel subunit of the sodium ion pump methylmalonyl-CoA decarboxylase, which converts the chemical energy of a decarboxylation reaction into an electrochemical gradient of Na(+) ions across the cytoplasmic membrane, thereby creating a sodium ion motive force that is used for ATP synthesis. The beta subunit catalyzes the decarboxylation of the carboxybiotin carrier protein and the coupled export of Na(+) ions. This Propionigenium modestum protein is Methylmalonyl-CoA decarboxylase subunit beta.